A 1021-amino-acid chain; its full sequence is Ribosome quality control complex subunit 2 (1021 aa).

The stretch at 348-388 forms a coiled coil; that stretch reads IEAQKLKKRAHDRLATAERRLESAKEDQARKLQSLQDAQAT. A disordered region spans residues 457–484; that stretch reads NPESVDNSDESSETSDDDLDDSDDDNKV. Positions 462 to 480 are enriched in acidic residues; the sequence is DNSDESSETSDDDLDDSDD. Ser478 carries the phosphoserine modification. 2 coiled-coil regions span residues 507–546 and 698–727; these read NARKQYELRREALIKETKTAEAASKALKSTQRKIEQDLKR and DEKSSERRKARRLEMEVVETQGKVSELKME. Polar residues-rich tracts occupy residues 746–761 and 839–856; these read YNEDTNNQSTPDTTGS and ISSQIPSNDSSNVQTPTA. Disordered stretches follow at residues 746 to 801 and 832 to 905; these read YNED…TALE and HAAR…VESF. Residues 876–905 are compositionally biased toward basic and acidic residues; sequence DQSRNSEAENEKGLSTEQRDEKKHAKVESF.

Belongs to the NEMF family. Component of the ribosome quality control complex (RQC), composed of the E3 ubiquitin ligase rkr1/ltn1, rqc1 and mtr1/rqc2, as well as cdc48 and its ubiquitin-binding cofactors associated with the 60S ribosomal subunit. RQC2 binds to the 40S-binding surface of tRNAs.

The protein localises to the cytoplasm. Its function is as follows. Key component of the ribosome quality control complex (RQC), a ribosome-associated complex that mediates the extraction of incompletely synthesized nascent chains from stalled ribosomes as well as their ubiquitin-mediated proteasomal degradation. Thereby, frees 60S subunit ribosomes from the stalled translation complex and prevents the accumulation of nascent polypeptide chains that are potentially toxic for the cell. Within the RQC complex, mtr1/rqc2 specifically binds stalled 60S ribosomal subunits by recognizing an exposed, nascent chain-conjugated tRNA moiety and promotes the recruitment of rkr1/ltn1 to stalled 60S subunits. Following binding to stalled 60S ribosomal subunits, mtr1/rqc2 mediates CAT tailing by recruiting alanine- and threonine-charged tRNA to the A-site and directing the elongation of stalled nascent chains independently of mRNA or 40S subunits, leading to non-templated C-terminal Ala and Thr extensions (CAT tails). CAT tails promote the rkr1/ltn1-mediated ubiquitination of incompletely synthesized nascent polypeptides: CAT tailing facilitates rkr1/ltn1-dependent ubiquitination by exposing lysine residues that would otherwise remain buried in the ribosomal exit tunnel. Following ubiquitination, incompletely synthesized nascent polypeptides are recognized by CDC48 and degraded by the proteasome. CAT-tailed proteins tend to aggregate and sequester chaperones and can induce proteotoxic stress; their rkr1/ltn1-dependent ubiquitination and degradation is required to prevent proteotoxic stress. The sequence is that of Ribosome quality control complex subunit 2 from Schizosaccharomyces pombe (strain 972 / ATCC 24843) (Fission yeast).